Here is a 236-residue protein sequence, read N- to C-terminus: C-&gt;U-editing enzyme APOBEC-1 (236 aa).

Positions Gly10–Leu134 constitute a CMP/dCMP-type deaminase domain. Position 61 (His61) interacts with Zn(2+). The active-site Proton donor is Glu63. Zn(2+) contacts are provided by Cys93 and Cys96.

It belongs to the cytidine and deoxycytidylate deaminase family. As to quaternary structure, homodimer. Interacts with A1CF; form an mRNA editing complex. Interacts with RBM47; form an mRNA editing complex. Found in a complex with CELF2/CUGBP2 and A1CF. Interacts with HNRPAB. Interacts with SYNCRIP. Requires Zn(2+) as cofactor. In terms of tissue distribution, expressed exclusively in the small intestine.

It localises to the cytoplasm. The protein resides in the nucleus. The enzyme catalyses a cytidine in mRNA + H2O + H(+) = a uridine in mRNA + NH4(+). The catalysed reaction is cytidine(6666) in apoB mRNA + H2O + H(+) = uridine(6666) in apoB mRNA + NH4(+). Its function is as follows. Cytidine deaminase catalyzing the cytidine to uridine postranscriptional editing of a variety of mRNAs. Form complexes with cofactors that confer differential editing activity and selectivity. Responsible for the postranscriptional editing of a CAA codon for Gln to a UAA codon for stop in the apolipoprotein B mRNA. Also involved in CGA (Arg) to UGA (Stop) editing in the NF1 mRNA. May also play a role in the epigenetic regulation of gene expression by participating in DNA demethylation. This Homo sapiens (Human) protein is C-&gt;U-editing enzyme APOBEC-1.